Consider the following 153-residue polypeptide: Riboflavin synthase (153 aa).

Belongs to the DMRL synthase family. As to quaternary structure, homooligomer. The cofactor is Mg(2+).

It catalyses the reaction 2 6,7-dimethyl-8-(1-D-ribityl)lumazine + H(+) = 5-amino-6-(D-ribitylamino)uracil + riboflavin. Its pathway is cofactor biosynthesis; riboflavin biosynthesis; riboflavin from 2-hydroxy-3-oxobutyl phosphate and 5-amino-6-(D-ribitylamino)uracil: step 2/2. Its activity is regulated as follows. Inhibited by EDTA. The polypeptide is Riboflavin synthase (ribC) (Methanothermobacter thermautotrophicus (strain ATCC 29096 / DSM 1053 / JCM 10044 / NBRC 100330 / Delta H) (Methanobacterium thermoautotrophicum)).